A 114-amino-acid polypeptide reads, in one-letter code: Probable gas vesicle protein J2 (114 aa).

Basic and acidic residues predominate over residues 1–10; sequence MTDLDHRYPG. The disordered stretch occupies residues 1-21; sequence MTDLDHRYPGEETEPYGPPSG.

This sequence belongs to the gas vesicle GvpA family. Interacts with GvpA.

It localises to the gas vesicle. In terms of biological role, a minor component of the gas vesicle, might be involved in nucleating gas vesicle formation. Gas vesicles (GV) are hollow, gas filled proteinaceous nanostructures. It is not clear what function GVs perform in soil bacteria. The chain is Probable gas vesicle protein J2 from Streptomyces coelicolor (strain ATCC BAA-471 / A3(2) / M145).